Reading from the N-terminus, the 642-residue chain is Chaperone protein DnaK (642 aa).

A Phosphothreonine; by autocatalysis modification is found at threonine 200. Low complexity predominate over residues 600 to 616 (EAAQQSAGAAGPMPGAP). The disordered stretch occupies residues 600 to 642 (EAAQQSAGAAGPMPGAPAEEEPSDGPRKAKGRVVDAEIVDDDK). Over residues 623 to 634 (DGPRKAKGRVVD) the composition is skewed to basic and acidic residues.

This sequence belongs to the heat shock protein 70 family.

In terms of biological role, acts as a chaperone. The protein is Chaperone protein DnaK of Akkermansia muciniphila (strain ATCC BAA-835 / DSM 22959 / JCM 33894 / BCRC 81048 / CCUG 64013 / CIP 107961 / Muc).